Here is a 555-residue protein sequence, read N- to C-terminus: Urocanate hydratase (555 aa).

Residues 52–53 (GG), glutamine 130, 176–178 (GMG), glutamate 196, arginine 201, 242–243 (NA), 263–267 (QTSAH), 273–274 (YL), and tyrosine 322 contribute to the NAD(+) site. Residue cysteine 410 is part of the active site. Glycine 492 provides a ligand contact to NAD(+).

This sequence belongs to the urocanase family. It depends on NAD(+) as a cofactor.

It is found in the cytoplasm. The catalysed reaction is 4-imidazolone-5-propanoate = trans-urocanate + H2O. Its pathway is amino-acid degradation; L-histidine degradation into L-glutamate; N-formimidoyl-L-glutamate from L-histidine: step 2/3. In terms of biological role, catalyzes the conversion of urocanate to 4-imidazolone-5-propionate. This Shewanella sp. (strain W3-18-1) protein is Urocanate hydratase.